We begin with the raw amino-acid sequence, 295 residues long: Trimeric intracellular cation channel type A (295 aa).

The Lumenal segment spans residues 1-18; sequence MELLSALSLGELALSFSR. A helical membrane pass occupies residues 19–39; the sequence is VPLFPVFDLSYFIVSILYLKY. The Cytoplasmic segment spans residues 40 to 51; it reads EPGAVELSRRHP. The chain crosses the membrane as a helical span at residues 52-72; the sequence is VASWLCAMLHCFGSYILADLL. Topologically, residues 73-85 are lumenal; that stretch reads LGEPLIDYFSNNS. Gly-74 contacts Ca(2+). Residues 86–106 form a helical membrane-spanning segment; it reads SILLASAVWYLIFFCPLDLFY. The Cytoplasmic portion of the chain corresponds to 107–144; that stretch reads KCVCFLPVKLIFVAMKEVVRVRKIAVGIHHAHHHYHHG. A 1,2-diacyl-sn-glycero-3-phospho-(1D-myo-inositol-4,5-bisphosphate) contacts are provided by Lys-122 and Arg-126. A helical transmembrane segment spans residues 145–165; it reads WFIMIATGWVKGSGVALLSNV. The Lumenal segment spans residues 166–178; that stretch reads EQLLRGVWKPETN. A helical transmembrane segment spans residues 179–199; that stretch reads EILHMSFPTKASLYGAILFTL. Over 200–209 the chain is Cytoplasmic; the sequence is QQTRWLPVSK. Residues 210-230 traverse the membrane as a helical segment; it reads ASLIFIFTMFMVSCKVFLTAT. Topologically, residues 231–234 are lumenal; that stretch reads HSHS. The chain crosses the membrane as a helical span at residues 235-255; it reads SPFDVLEAYVCPVLFGTGSGG. The Cytoplasmic portion of the chain corresponds to 256-295; the sequence is DHPQDNHGAWPGGPPSGALATKSKEELSEGSRKKKTKKAD. The tract at residues 256–295 is disordered; that stretch reads DHPQDNHGAWPGGPPSGALATKSKEELSEGSRKKKTKKAD. Residues 277 to 286 are compositionally biased toward basic and acidic residues; that stretch reads KSKEELSEGS.

Belongs to the TMEM38 family. As to quaternary structure, homotrimer; conformation seems to be controled by binding to diacylglycerol (DAG).

It localises to the sarcoplasmic reticulum membrane. The protein localises to the nucleus membrane. It catalyses the reaction K(+)(in) = K(+)(out). Channel activity is activated by a change of voltage within the sarcoplasmic reticulum lumen and blocked by luminal high Ca(2+) levels. In terms of biological role, intracellular monovalent cation channel required for maintenance of rapid intracellular calcium release. Acts as a potassium counter-ion channel that functions in synchronization with calcium release from intracellular stores. Opened by a change of voltage within the sarcoplasmic reticulum lumen. This chain is Trimeric intracellular cation channel type A, found in Oryctolagus cuniculus (Rabbit).